The sequence spans 321 residues: N-acetyllactosaminide alpha-1,3-galactosyltransferase-like 1 (321 aa).

Residues 1–6 (MQYKKE) lie on the Cytoplasmic side of the membrane. Residues 7–24 (TLLLILLAILLALTQRYS) form a helical; Signal-anchor for type II membrane protein membrane-spanning segment. Residues 25–321 (RTKDHLQKMY…IKVAWQPRIT (297 aa)) are Lumenal-facing. N-linked (GlcNAc...) asparagine glycans are attached at residues Asn-87 and Asn-99. Residues 95 to 100 (FATGNF), 187 to 189 (TAN), and 209 to 212 (HAWW) contribute to the substrate site. Glu-277 serves as the catalytic Nucleophile.

This sequence belongs to the glycosyltransferase 6 family. Mn(2+) is required as a cofactor.

It localises to the golgi apparatus. The protein localises to the golgi stack membrane. The enzyme catalyses a beta-D-galactosyl-(1-&gt;4)-N-acetyl-beta-D-glucosaminyl derivative + UDP-alpha-D-galactose = an alpha-D-galactosyl-(1-&gt;3)-beta-D-galactosyl-(1-&gt;4)-N-acetyl-beta-D-glucosaminyl derivative + UDP + H(+). The protein operates within protein modification; protein glycosylation. Its function is as follows. Synthesizes the galactose-alpha(1,3)-galactose group by catalyzing the transfer of a galactose residue, with an alpha-1,3 linkage, on terminal lactosaminide (Gal-beta-1,4-GlcNAc-R) disaccharide borne by a glycoprotein or a glycolipid. The sequence is that of N-acetyllactosaminide alpha-1,3-galactosyltransferase-like 1 (Ggta1l1) from Rattus norvegicus (Rat).